We begin with the raw amino-acid sequence, 244 residues long: Isoprenyl transferase (244 aa).

D23 is a catalytic residue. D23 contacts Mg(2+). Substrate is bound by residues 24–27 (GNGR), W28, R36, H40, and 68–70 (STE). The active-site Proton acceptor is N71. Substrate contacts are provided by residues W72, R74, R191, and 197–199 (RMS). E210 is a Mg(2+) binding site.

It belongs to the UPP synthase family. Homodimer. Mg(2+) serves as cofactor.

In terms of biological role, catalyzes the condensation of isopentenyl diphosphate (IPP) with allylic pyrophosphates generating different type of terpenoids. This is Isoprenyl transferase from Lactococcus lactis subsp. lactis (strain IL1403) (Streptococcus lactis).